We begin with the raw amino-acid sequence, 98 residues long: U10-barytoxin-Tl1a (98 aa).

An N-terminal signal peptide occupies residues 1-21 (MKTLVLVAVLGVASLYLLSSA). The propeptide occupies 22–50 (SEVQQLSPAEEEFRAFVSTFGGLFETEER). Cystine bridges form between Cys-57–Cys-71, Cys-64–Cys-76, and Cys-70–Cys-89.

It belongs to the neurotoxin 10 (Hwtx-1) family. 27 (ICK-3) subfamily. As to expression, expressed by the venom gland.

It localises to the secreted. Functionally, ion channel inhibitor. In Trittame loki (Brush-footed trapdoor spider), this protein is U10-barytoxin-Tl1a.